The following is a 625-amino-acid chain: Phosphomethylpyrimidine synthase (625 aa).

Residues asparagine 231, methionine 260, tyrosine 289, histidine 325, 345–347, 386–389, and glutamate 425 contribute to the substrate site; these read SRG and DGLR. Position 429 (histidine 429) interacts with Zn(2+). Substrate is bound at residue tyrosine 452. Histidine 493 is a binding site for Zn(2+). Cysteine 573, cysteine 576, and cysteine 581 together coordinate [4Fe-4S] cluster.

The protein belongs to the ThiC family. In terms of assembly, homodimer. [4Fe-4S] cluster serves as cofactor.

It carries out the reaction 5-amino-1-(5-phospho-beta-D-ribosyl)imidazole + S-adenosyl-L-methionine = 4-amino-2-methyl-5-(phosphooxymethyl)pyrimidine + CO + 5'-deoxyadenosine + formate + L-methionine + 3 H(+). Its pathway is cofactor biosynthesis; thiamine diphosphate biosynthesis. In terms of biological role, catalyzes the synthesis of the hydroxymethylpyrimidine phosphate (HMP-P) moiety of thiamine from aminoimidazole ribotide (AIR) in a radical S-adenosyl-L-methionine (SAM)-dependent reaction. The sequence is that of Phosphomethylpyrimidine synthase from Acinetobacter baumannii (strain AB0057).